Consider the following 946-residue polypeptide: Protein translocase subunit SecA (946 aa).

Residues Gln87, 105 to 109 (GEGKT), and Asp524 each bind ATP. The interval 904–933 (PAQTTDKADRDPNKPETWGKVGRNEDCPCG) is disordered. Positions 930, 932, 941, and 942 each coordinate Zn(2+).

This sequence belongs to the SecA family. As to quaternary structure, monomer and homodimer. Part of the essential Sec protein translocation apparatus which comprises SecA, SecYEG and auxiliary proteins SecDF-YajC and YidC. It depends on Zn(2+) as a cofactor.

Its subcellular location is the cell inner membrane. It is found in the cytoplasm. The catalysed reaction is ATP + H2O + cellular proteinSide 1 = ADP + phosphate + cellular proteinSide 2.. Part of the Sec protein translocase complex. Interacts with the SecYEG preprotein conducting channel. Has a central role in coupling the hydrolysis of ATP to the transfer of proteins into and across the cell membrane, serving both as a receptor for the preprotein-SecB complex and as an ATP-driven molecular motor driving the stepwise translocation of polypeptide chains across the membrane. This Rhodopseudomonas palustris (strain TIE-1) protein is Protein translocase subunit SecA.